Consider the following 251-residue polypeptide: Probable transcriptional regulatory protein Cpar_0525 (251 aa).

This sequence belongs to the TACO1 family.

It localises to the cytoplasm. In Chlorobaculum parvum (strain DSM 263 / NCIMB 8327) (Chlorobium vibrioforme subsp. thiosulfatophilum), this protein is Probable transcriptional regulatory protein Cpar_0525.